Reading from the N-terminus, the 325-residue chain is UDP-N-acetylglucosamine transporter (325 aa).

Helical transmembrane passes span 8–24 (VSLG…VLTM), 42–58 (AVVV…ILLV), 138–154 (VYQW…VAFV), 173–189 (FVGL…SGFA), 209–225 (IQLG…GVYI), 246–262 (IVVV…AAVI), 268–284 (ILKG…STLI), and 295–311 (TSVF…ATFL).

This sequence belongs to the nucleotide-sugar transporter family. SLC35A subfamily. As to quaternary structure, interacts with SLC35A2; the interaction is reduced in the presence of SLC35A4. Found in a complex with SLC35A2 and SLC35A4. Interacts with MGAT4B. In terms of processing, O-Glcnacylation regulates the stability of SLC35A3 and the specific complex formation with MGAT4B.

The protein localises to the golgi apparatus membrane. It catalyses the reaction UMP(out) + UDP-N-acetyl-alpha-D-glucosamine(in) = UMP(in) + UDP-N-acetyl-alpha-D-glucosamine(out). In terms of biological role, transports diphosphate-N-acetylglucosamine (UDP-GlcNAc) from the cytosol into the lumen of the Golgi apparatus, functioning as an antiporter that exchanges UDP-N-acetyl-alpha-D-glucosamine for UMP. May supply UDP-GlcNAc as substrate for Golgi-resident glycosyltransferases that generate highly branched, multiantennary complex N-glycans and keratan sulfate. However, the exact role of SLC35A3 still needs to be elucidated, it could be a member of a catalytically more efficient multiprotein complex rather than function independently as a single transporter. In Homo sapiens (Human), this protein is UDP-N-acetylglucosamine transporter (SLC35A3).